Consider the following 140-residue polypeptide: Large ribosomal subunit protein uL11 (140 aa).

The protein belongs to the universal ribosomal protein uL11 family. Part of the ribosomal stalk of the 50S ribosomal subunit. Interacts with L10 and the large rRNA to form the base of the stalk. L10 forms an elongated spine to which L12 dimers bind in a sequential fashion forming a multimeric L10(L12)X complex. One or more lysine residues are methylated.

Forms part of the ribosomal stalk which helps the ribosome interact with GTP-bound translation factors. This chain is Large ribosomal subunit protein uL11, found in Nitratidesulfovibrio vulgaris (strain ATCC 29579 / DSM 644 / CCUG 34227 / NCIMB 8303 / VKM B-1760 / Hildenborough) (Desulfovibrio vulgaris).